A 179-amino-acid polypeptide reads, in one-letter code: Photosystem I assembly protein Ycf4 (179 aa).

Transmembrane regions (helical) follow at residues 21-41 (LISFSGGIGFLLAGLSSYLGV) and 59-79 (IVMTFYGTIGILLSLFLLLNI).

The protein belongs to the Ycf4 family.

It localises to the plastid. Its subcellular location is the chloroplast thylakoid membrane. Functionally, seems to be required for the assembly of the photosystem I complex. The protein is Photosystem I assembly protein Ycf4 of Rhodomonas salina (Cryptomonas salina).